Consider the following 379-residue polypeptide: Cytochrome b (379 aa).

Transmembrane regions (helical) follow at residues 33–53 (FGSL…FLAM), 77–98 (WLIR…FIHV), 113–133 (WNIG…GYVL), and 178–198 (FFAF…VHLL). Heme b-binding residues include histidine 83 and histidine 97. Residues histidine 182 and histidine 196 each coordinate heme b. Histidine 201 contacts a ubiquinone. A run of 4 helical transmembrane segments spans residues 226 to 246 (IKDL…ALFF), 288 to 308 (LGGV…PLLN), 320 to 340 (VTQT…WIGG), and 347 to 367 (FTMI…VLMP).

It belongs to the cytochrome b family. In terms of assembly, the cytochrome bc1 complex contains 11 subunits: 3 respiratory subunits (MT-CYB, CYC1 and UQCRFS1), 2 core proteins (UQCRC1 and UQCRC2) and 6 low-molecular weight proteins (UQCRH/QCR6, UQCRB/QCR7, UQCRQ/QCR8, UQCR10/QCR9, UQCR11/QCR10 and a cleavage product of UQCRFS1). This cytochrome bc1 complex then forms a dimer. Heme b serves as cofactor.

The protein resides in the mitochondrion inner membrane. Functionally, component of the ubiquinol-cytochrome c reductase complex (complex III or cytochrome b-c1 complex) that is part of the mitochondrial respiratory chain. The b-c1 complex mediates electron transfer from ubiquinol to cytochrome c. Contributes to the generation of a proton gradient across the mitochondrial membrane that is then used for ATP synthesis. This chain is Cytochrome b (MT-CYB), found in Akodon iniscatus (Intelligent grass mouse).